Consider the following 74-residue polypeptide: DNA-directed RNA polymerase subunit omega (74 aa).

It belongs to the RNA polymerase subunit omega family. As to quaternary structure, the RNAP catalytic core consists of 2 alpha, 1 beta, 1 beta' and 1 omega subunit. When a sigma factor is associated with the core the holoenzyme is formed, which can initiate transcription.

The enzyme catalyses RNA(n) + a ribonucleoside 5'-triphosphate = RNA(n+1) + diphosphate. Its function is as follows. Promotes RNA polymerase assembly. Latches the N- and C-terminal regions of the beta' subunit thereby facilitating its interaction with the beta and alpha subunits. The polypeptide is DNA-directed RNA polymerase subunit omega (Helicobacter acinonychis (strain Sheeba)).